A 150-amino-acid chain; its full sequence is uncharacterized protein (150 aa).

3 helical membrane passes run valine 50 to leucine 70, leucine 80 to leucine 100, and lysine 127 to glutamate 147.

It is found in the membrane. This is an uncharacterized protein from Schizosaccharomyces pombe (strain 972 / ATCC 24843) (Fission yeast).